A 24-amino-acid polypeptide reads, in one-letter code: Brevinin-1SPa (24 aa).

Residues cysteine 18 and cysteine 24 are joined by a disulfide bond.

Expressed by the skin glands.

It localises to the secreted. Its function is as follows. Antimicrobial peptide with activity against Gram-negative and Gram-positive bacteria (MIC=13 uM against E.coli, MIC=3 uM against S.aureus) and fungi (MIC=6 uM against C.albicans). Shows hemolytic activity on human erythrocytes (HC(50)=7 uM). The chain is Brevinin-1SPa from Lithobates septentrionalis (Mink frog).